The primary structure comprises 310 residues: Putative methyltransferase mtx subunit H (310 aa).

The protein belongs to the MtrH family. In terms of assembly, may be part of a complex composed of 3 subunits; MtxA, MtxH and MtxX.

In Methanosarcina mazei (strain ATCC BAA-159 / DSM 3647 / Goe1 / Go1 / JCM 11833 / OCM 88) (Methanosarcina frisia), this protein is Putative methyltransferase mtx subunit H (mtxH).